Reading from the N-terminus, the 261-residue chain is MNKFLIIDGLNLVRRIYAAIPDENDMESLTERVSVACTKLLRIHHPTHVAVVWDGDEISWRKQLYPDYKKGRKPMPEPLAAGLIALQEHLQNLQIQSIYAAAEADDVIATLATKTAKAQGEALIVSTDKGFSQLNHPRISQWDHFNQQYLNIAELEQKLGVDRSQFLDLMALAGDSGNKIPGIPGIGPKSAAELLRTFRTLATLFSSLPNLGAKQAKKLAEGRDMARLSYKLVQLQTDLPLNINLRDFRVNSPTKASSNNL.

D105 contributes to the Mg(2+) binding site. The 5'-3' exonuclease domain maps to 164 to 256; the sequence is SQFLDLMALA…DFRVNSPTKA (93 aa). The K(+) site is built by L172, A173, P181, I183, and I186. Residues 185-190 are interaction with DNA; it reads GIGPKS.

The protein belongs to the Xni family. It depends on Mg(2+) as a cofactor. The cofactor is K(+).

Has flap endonuclease activity. During DNA replication, flap endonucleases cleave the 5'-overhanging flap structure that is generated by displacement synthesis when DNA polymerase encounters the 5'-end of a downstream Okazaki fragment. The protein is Flap endonuclease Xni of Shewanella oneidensis (strain ATCC 700550 / JCM 31522 / CIP 106686 / LMG 19005 / NCIMB 14063 / MR-1).